The following is a 71-amino-acid chain: UPF0352 protein Ssed_1809 (71 aa).

This sequence belongs to the UPF0352 family.

The protein is UPF0352 protein Ssed_1809 of Shewanella sediminis (strain HAW-EB3).